The chain runs to 553 residues: Hyaluronan synthase 3 (553 aa).

At 1-15 the chain is on the cytoplasmic side; the sequence is MPVQLTTALRVVGTS. A helical transmembrane segment spans residues 16–36; it reads LFALAVLGGILAAYVTGYQFI. Topologically, residues 37–44 are extracellular; that stretch reads HTEKHYLS. Residues 45–65 form a helical membrane-spanning segment; it reads FGLYGAILGLHLLIQSLFAFL. The Cytoplasmic portion of the chain corresponds to 66–377; the sequence is EHRRMRRAGQ…NSLWFHKHHL (312 aa). The helical transmembrane segment at 378 to 398 threads the bilayer; sequence WMTYESVVTGFFPFFLIATVI. At 399–408 the chain is on the extracellular side; sequence QLFYRGRIWN. The chain crosses the membrane as a helical span at residues 409 to 429; it reads ILLFLLTVQLVGIIKATYACF. Residues 430–440 are Cytoplasmic-facing; sequence LRGNAEMIFMS. A helical membrane pass occupies residues 441-461; the sequence is LYSLLYMSSLLPAKIFAIATI. N-linked (GlcNAc...) asparagine glycosylation is present at asparagine 462. At 462–473 the chain is on the extracellular side; it reads NKSGWGTSGRKT. The helical transmembrane segment at 474-494 threads the bilayer; it reads IVVNFIGLIPVSIWVAVLLGG. Topologically, residues 495–515 are cytoplasmic; sequence LAYTAYCQDLFSETELAFLVS. A helical membrane pass occupies residues 516-536; that stretch reads GAILYGCYWVALLMLYLAIIA. Topologically, residues 537–553 are extracellular; sequence RRCGKKPEQYSLAFAEV.

Belongs to the NodC/HAS family. In terms of assembly, homodimers. Forms heterodimers with HAS2 and HAS1. Mg(2+) is required as a cofactor. In terms of processing, O-GlcNAcylation increases the hyaluronan synthase activity, HAS3 stability and its plasma membrane residence. The concentration of UDP-GlcNAc controls the level of O-GlcNAc modification.

It is found in the cell membrane. It localises to the golgi apparatus membrane. The protein localises to the golgi apparatus. The protein resides in the trans-Golgi network membrane. Its subcellular location is the early endosome. The catalysed reaction is [hyaluronan](n) + UDP-N-acetyl-alpha-D-glucosamine = N-acetyl-beta-D-glucosaminyl-(1-&gt;4)-[hyaluronan](n) + UDP + H(+). The enzyme catalyses N-acetyl-beta-D-glucosaminyl-(1-&gt;4)-[hyaluronan](n) + UDP-alpha-D-glucuronate = [hyaluronan](n+1) + UDP + H(+). It functions in the pathway glycan biosynthesis; hyaluronan biosynthesis. Its activity is regulated as follows. The enzymatic activity depends on the availability of cytosolic levels of UDP-GlcUA and UDP-GlcNAc. Catalyzes the addition of GlcNAc or GlcUA monosaccharides to the nascent hyaluronan polymer. Therefore, it is essential to hyaluronan synthesis a major component of most extracellular matrices that has a structural role in tissues architectures and regulates cell adhesion, migration and differentiation. This is one of three isoenzymes responsible for cellular hyaluronan synthesis. The protein is Hyaluronan synthase 3 of Homo sapiens (Human).